The primary structure comprises 322 residues: RNA pseudouridine synthase 1 (322 aa).

The active site involves aspartate 120.

This sequence belongs to the pseudouridine synthase RluA family.

It catalyses the reaction a uridine in RNA = a pseudouridine in RNA. The sequence is that of RNA pseudouridine synthase 1 from Arabidopsis thaliana (Mouse-ear cress).